A 201-amino-acid polypeptide reads, in one-letter code: Dephospho-CoA kinase (201 aa).

The 192-residue stretch at 10–201 (LIGLTGGIAT…PQIIKAWHHR (192 aa)) folds into the DPCK domain. An ATP-binding site is contributed by 18 to 23 (ATGKST).

It belongs to the CoaE family.

It localises to the cytoplasm. The catalysed reaction is 3'-dephospho-CoA + ATP = ADP + CoA + H(+). The protein operates within cofactor biosynthesis; coenzyme A biosynthesis; CoA from (R)-pantothenate: step 5/5. Catalyzes the phosphorylation of the 3'-hydroxyl group of dephosphocoenzyme A to form coenzyme A. The protein is Dephospho-CoA kinase of Synechocystis sp. (strain ATCC 27184 / PCC 6803 / Kazusa).